The primary structure comprises 133 residues: Large ribosomal subunit protein eL32y (133 aa).

This sequence belongs to the eukaryotic ribosomal protein eL32 family.

The protein is Large ribosomal subunit protein eL32y (RPL32B) of Arabidopsis thaliana (Mouse-ear cress).